The following is a 141-amino-acid chain: Large ribosomal subunit protein uL11 (141 aa).

This sequence belongs to the universal ribosomal protein uL11 family. In terms of assembly, part of the ribosomal stalk of the 50S ribosomal subunit. Interacts with L10 and the large rRNA to form the base of the stalk. L10 forms an elongated spine to which L12 dimers bind in a sequential fashion forming a multimeric L10(L12)X complex. In terms of processing, one or more lysine residues are methylated.

Functionally, forms part of the ribosomal stalk which helps the ribosome interact with GTP-bound translation factors. This chain is Large ribosomal subunit protein uL11, found in Listeria innocua serovar 6a (strain ATCC BAA-680 / CLIP 11262).